The following is a 343-amino-acid chain: tRNA N6-adenosine threonylcarbamoyltransferase (343 aa).

Fe cation-binding residues include histidine 111 and histidine 115. Substrate is bound by residues 134–138 (LVSGG), aspartate 167, glycine 180, and asparagine 276. Residue aspartate 304 participates in Fe cation binding.

This sequence belongs to the KAE1 / TsaD family. Requires Fe(2+) as cofactor.

The protein resides in the cytoplasm. The catalysed reaction is L-threonylcarbamoyladenylate + adenosine(37) in tRNA = N(6)-L-threonylcarbamoyladenosine(37) in tRNA + AMP + H(+). Its function is as follows. Required for the formation of a threonylcarbamoyl group on adenosine at position 37 (t(6)A37) in tRNAs that read codons beginning with adenine. Is involved in the transfer of the threonylcarbamoyl moiety of threonylcarbamoyl-AMP (TC-AMP) to the N6 group of A37, together with TsaE and TsaB. TsaD likely plays a direct catalytic role in this reaction. This chain is tRNA N6-adenosine threonylcarbamoyltransferase, found in Chromohalobacter salexigens (strain ATCC BAA-138 / DSM 3043 / CIP 106854 / NCIMB 13768 / 1H11).